The chain runs to 159 residues: Transcription elongation factor GreA (159 aa).

Residues 14–76 (VKKLEEELEY…QLENMLRNAN (63 aa)) are a coiled coil.

Belongs to the GreA/GreB family.

In terms of biological role, necessary for efficient RNA polymerase transcription elongation past template-encoded arresting sites. The arresting sites in DNA have the property of trapping a certain fraction of elongating RNA polymerases that pass through, resulting in locked ternary complexes. Cleavage of the nascent transcript by cleavage factors such as GreA or GreB allows the resumption of elongation from the new 3'terminus. GreA releases sequences of 2 to 3 nucleotides. The sequence is that of Transcription elongation factor GreA from Clostridium novyi (strain NT).